Here is a 59-residue protein sequence, read N- to C-terminus: UPF0337 protein PP_4561 (59 aa).

Over residues 27–43 (TDNEKLRAEGKAQELKG) the composition is skewed to basic and acidic residues. Residues 27-59 (TDNEKLRAEGKAQELKGEAQQVKGNVKDAVKKP) form a disordered region.

It belongs to the UPF0337 (CsbD) family.

This Pseudomonas putida (strain ATCC 47054 / DSM 6125 / CFBP 8728 / NCIMB 11950 / KT2440) protein is UPF0337 protein PP_4561.